The sequence spans 854 residues: Putative Tricorn-like protease C-terminal subunit (854 aa).

Residue His539 is the Charge relay system of the active site. The PDZ-like stretch occupies residues 554 to 646 (PIGGLGADYE…RVTVKLLKDE (93 aa)). Substrate is bound at residue Gly709. The Nucleophile role is filled by Ser756. The active-site Charge relay system is the Glu814.

It belongs to the peptidase S41B family.

It localises to the cytoplasm. In terms of biological role, degrades oligopeptides in a sequential manner. The polypeptide is Putative Tricorn-like protease C-terminal subunit (triC) (Sulfurisphaera tokodaii (strain DSM 16993 / JCM 10545 / NBRC 100140 / 7) (Sulfolobus tokodaii)).